The following is a 364-amino-acid chain: Guanine nucleotide-binding protein alpha-8 subunit (364 aa).

G2 carries the N-myristoyl glycine lipid modification. C5 carries S-palmitoyl cysteine lipidation. Residues 38–364 enclose the G-alpha domain; sequence KILKLLILGP…QHTMQKVGIQ (327 aa). Positions 41–54 are G1 motif; sequence KLLILGPGESGKST. Residues 46-53, 186-192, 211-215, 280-283, and A336 each bind GTP; these read GPGESGKS, LKSRVPT, DVGGQ, and NKID. S53 and T192 together coordinate Mg(2+). The tract at residues 184-192 is G2 motif; that stretch reads DILKSRVPT. The segment at 207 to 216 is G3 motif; the sequence is FKIFDVGGQR. Residues 276-283 form a G4 motif region; sequence ILFLNKID. The segment at 334–339 is G5 motif; the sequence is TCATDT.

This sequence belongs to the G-alpha family. As to quaternary structure, g proteins are composed of 3 units; alpha, beta and gamma. The alpha chain contains the guanine nucleotide binding site.

In terms of biological role, guanine nucleotide-binding proteins (G proteins) are involved as modulators or transducers in various transmembrane signaling systems. In Caenorhabditis briggsae, this protein is Guanine nucleotide-binding protein alpha-8 subunit (gpa-8).